The sequence spans 292 residues: Bifunctional protein FolD (292 aa).

Residues 166–168, Ser-191, and Ile-232 each bind NADP(+); that span reads GRS.

Belongs to the tetrahydrofolate dehydrogenase/cyclohydrolase family. As to quaternary structure, homodimer.

The catalysed reaction is (6R)-5,10-methylene-5,6,7,8-tetrahydrofolate + NADP(+) = (6R)-5,10-methenyltetrahydrofolate + NADPH. It catalyses the reaction (6R)-5,10-methenyltetrahydrofolate + H2O = (6R)-10-formyltetrahydrofolate + H(+). It functions in the pathway one-carbon metabolism; tetrahydrofolate interconversion. Its function is as follows. Catalyzes the oxidation of 5,10-methylenetetrahydrofolate to 5,10-methenyltetrahydrofolate and then the hydrolysis of 5,10-methenyltetrahydrofolate to 10-formyltetrahydrofolate. The sequence is that of Bifunctional protein FolD from Synechococcus sp. (strain RCC307).